We begin with the raw amino-acid sequence, 335 residues long: Fructose-1,6-bisphosphatase class 1 (335 aa).

The Mg(2+) site is built by Glu-93, Asp-117, Leu-119, and Asp-120. Substrate is bound by residues 120 to 123 (DGSS), Asn-213, Tyr-244, and Lys-274. Position 280 (Glu-280) interacts with Mg(2+).

It belongs to the FBPase class 1 family. As to quaternary structure, homotetramer. Mg(2+) is required as a cofactor.

It is found in the cytoplasm. The catalysed reaction is beta-D-fructose 1,6-bisphosphate + H2O = beta-D-fructose 6-phosphate + phosphate. Its pathway is carbohydrate biosynthesis; gluconeogenesis. In Flavobacterium psychrophilum (strain ATCC 49511 / DSM 21280 / CIP 103535 / JIP02/86), this protein is Fructose-1,6-bisphosphatase class 1.